A 153-amino-acid chain; its full sequence is Peptide methionine sulfoxide reductase MsrA (153 aa).

Residue Cys10 is part of the active site.

Belongs to the MsrA Met sulfoxide reductase family.

The enzyme catalyses L-methionyl-[protein] + [thioredoxin]-disulfide + H2O = L-methionyl-(S)-S-oxide-[protein] + [thioredoxin]-dithiol. It carries out the reaction [thioredoxin]-disulfide + L-methionine + H2O = L-methionine (S)-S-oxide + [thioredoxin]-dithiol. Has an important function as a repair enzyme for proteins that have been inactivated by oxidation. Catalyzes the reversible oxidation-reduction of methionine sulfoxide in proteins to methionine. The sequence is that of Peptide methionine sulfoxide reductase MsrA from Methanococcoides burtonii (strain DSM 6242 / NBRC 107633 / OCM 468 / ACE-M).